The chain runs to 289 residues: tRNA dimethylallyltransferase (289 aa).

Residue 9-16 (GTTASGKT) coordinates ATP. Position 11–16 (11–16 (TASGKT)) interacts with substrate. The segment at 34 to 37 (DSLC) is interaction with substrate tRNA.

It belongs to the IPP transferase family. Monomer. Mg(2+) is required as a cofactor.

The enzyme catalyses adenosine(37) in tRNA + dimethylallyl diphosphate = N(6)-dimethylallyladenosine(37) in tRNA + diphosphate. Its function is as follows. Catalyzes the transfer of a dimethylallyl group onto the adenine at position 37 in tRNAs that read codons beginning with uridine, leading to the formation of N6-(dimethylallyl)adenosine (i(6)A). In Campylobacter jejuni subsp. jejuni serotype O:23/36 (strain 81-176), this protein is tRNA dimethylallyltransferase.